Consider the following 533-residue polypeptide: Retinoid isomerohydrolase (533 aa).

Ser-2 carries the post-translational modification N-acetylserine. 2 positions are modified to phosphothreonine: Thr-101 and Thr-105. Cys-112 is lipidated: S-palmitoyl cysteine; in membrane form. Lys-113 carries the post-translational modification N6-acetyllysine. Ser-117 is modified (phosphoserine). His-180 serves as a coordination point for Fe cation. Residue Cys-231 is the site of S-palmitoyl cysteine; in membrane form attachment. The Fe cation site is built by His-241 and His-313. Residues Cys-329 and Cys-330 are each lipidated (S-palmitoyl cysteine; in membrane form). Position 527 (His-527) interacts with Fe cation.

It belongs to the carotenoid oxygenase family. As to quaternary structure, interacts with MYO7A; this mediates light-dependent intracellular transport of RPE65. Fe(2+) is required as a cofactor. In terms of processing, palmitoylation by LRAT regulates ligand binding specificity; the palmitoylated form (membrane form) specifically binds all-trans-retinyl-palmitate, while the soluble unpalmitoylated form binds all-trans-retinol (vitamin A). In terms of tissue distribution, retinal pigment epithelium specific.

It localises to the cytoplasm. The protein resides in the cell membrane. Its subcellular location is the microsome membrane. It catalyses the reaction an all-trans-retinyl ester + H2O = 11-cis-retinol + a fatty acid + H(+). The catalysed reaction is lutein = (3R,3'S)-zeaxanthin. It carries out the reaction all-trans-retinyl hexadecanoate + H2O = 11-cis-retinol + hexadecanoate + H(+). Critical isomerohydrolase in the retinoid cycle involved in regeneration of 11-cis-retinal, the chromophore of rod and cone opsins. Catalyzes the cleavage and isomerization of all-trans-retinyl fatty acid esters to 11-cis-retinol which is further oxidized by 11-cis retinol dehydrogenase to 11-cis-retinal for use as visual chromophore. Essential for the production of 11-cis retinal for both rod and cone photoreceptors. Also capable of catalyzing the isomerization of lutein to meso-zeaxanthin an eye-specific carotenoid. The soluble form binds vitamin A (all-trans-retinol), making it available for LRAT processing to all-trans-retinyl ester. The membrane form, palmitoylated by LRAT, binds all-trans-retinyl esters, making them available for IMH (isomerohydrolase) processing to all-cis-retinol. The soluble form is regenerated by transferring its palmitoyl groups onto 11-cis-retinol, a reaction catalyzed by LRAT. This Chlorocebus aethiops (Green monkey) protein is Retinoid isomerohydrolase (RPE65).